A 635-amino-acid polypeptide reads, in one-letter code: DNA primase (635 aa).

The segment at 41 to 65 adopts a CHC2-type zinc-finger fold; it reads CPFHDEKSPSFSVSPAKQMYYCFGC. One can recognise a Toprim domain in the interval 265 to 348; sequence DEAILVEGYF…SGQVNLRILN (84 aa). Residues E271, D317, and D319 each contribute to the Mg(2+) site.

Belongs to the DnaG primase family. As to quaternary structure, monomer. Interacts with DnaB. Zn(2+) serves as cofactor. Requires Mg(2+) as cofactor.

The catalysed reaction is ssDNA + n NTP = ssDNA/pppN(pN)n-1 hybrid + (n-1) diphosphate.. Its function is as follows. RNA polymerase that catalyzes the synthesis of short RNA molecules used as primers for DNA polymerase during DNA replication. This chain is DNA primase, found in Synechocystis sp. (strain ATCC 27184 / PCC 6803 / Kazusa).